The following is a 229-amino-acid chain: Sec-independent protein translocase protein TatB (229 aa).

Residues 1 to 21 form a helical membrane-spanning segment; sequence MFDIGFSELLLFGVIALIVLG. The disordered stretch occupies residues 90–131; the sequence is EFEHSQSQNLKTSDKAASPANQANNDSAIQNNNEPATFSYAY. Positions 108-131 are enriched in polar residues; that stretch reads PANQANNDSAIQNNNEPATFSYAY.

Belongs to the TatB family. As to quaternary structure, the Tat system comprises two distinct complexes: a TatABC complex, containing multiple copies of TatA, TatB and TatC subunits, and a separate TatA complex, containing only TatA subunits. Substrates initially bind to the TatABC complex, which probably triggers association of the separate TatA complex to form the active translocon.

The protein localises to the cell inner membrane. In terms of biological role, part of the twin-arginine translocation (Tat) system that transports large folded proteins containing a characteristic twin-arginine motif in their signal peptide across membranes. Together with TatC, TatB is part of a receptor directly interacting with Tat signal peptides. TatB may form an oligomeric binding site that transiently accommodates folded Tat precursor proteins before their translocation. This is Sec-independent protein translocase protein TatB from Psychrobacter arcticus (strain DSM 17307 / VKM B-2377 / 273-4).